The sequence spans 275 residues: 2,3,4,5-tetrahydropyridine-2,6-dicarboxylate N-succinyltransferase (275 aa).

This sequence belongs to the transferase hexapeptide repeat family.

It is found in the cytoplasm. The catalysed reaction is (S)-2,3,4,5-tetrahydrodipicolinate + succinyl-CoA + H2O = (S)-2-succinylamino-6-oxoheptanedioate + CoA. It participates in amino-acid biosynthesis; L-lysine biosynthesis via DAP pathway; LL-2,6-diaminopimelate from (S)-tetrahydrodipicolinate (succinylase route): step 1/3. The sequence is that of 2,3,4,5-tetrahydropyridine-2,6-dicarboxylate N-succinyltransferase from Paraburkholderia phymatum (strain DSM 17167 / CIP 108236 / LMG 21445 / STM815) (Burkholderia phymatum).